The following is a 57-amino-acid chain: Large ribosomal subunit protein bL33 (57 aa).

It belongs to the bacterial ribosomal protein bL33 family.

The chain is Large ribosomal subunit protein bL33 from Bifidobacterium longum (strain NCC 2705).